The following is a 200-amino-acid chain: Holliday junction branch migration complex subunit RuvA (200 aa).

The domain I stretch occupies residues 1 to 63 (MFEYLTGLIT…EDAITLFGFA (63 aa)). The interval 64-142 (TQAEKRLFTQ…AVQDEVQLDF (79 aa)) is domain II. The segment at 143–151 (TAPGPLGPS) is flexible linker. A domain III region spans residues 151-200 (SAALQDALAALESLGYTTKQVERVQKQLEGLQGELSTNDYLSQGLKLLSR).

The protein belongs to the RuvA family. As to quaternary structure, homotetramer. Forms an RuvA(8)-RuvB(12)-Holliday junction (HJ) complex. HJ DNA is sandwiched between 2 RuvA tetramers; dsDNA enters through RuvA and exits via RuvB. An RuvB hexamer assembles on each DNA strand where it exits the tetramer. Each RuvB hexamer is contacted by two RuvA subunits (via domain III) on 2 adjacent RuvB subunits; this complex drives branch migration. In the full resolvosome a probable DNA-RuvA(4)-RuvB(12)-RuvC(2) complex forms which resolves the HJ.

It is found in the cytoplasm. Functionally, the RuvA-RuvB-RuvC complex processes Holliday junction (HJ) DNA during genetic recombination and DNA repair, while the RuvA-RuvB complex plays an important role in the rescue of blocked DNA replication forks via replication fork reversal (RFR). RuvA specifically binds to HJ cruciform DNA, conferring on it an open structure. The RuvB hexamer acts as an ATP-dependent pump, pulling dsDNA into and through the RuvAB complex. HJ branch migration allows RuvC to scan DNA until it finds its consensus sequence, where it cleaves and resolves the cruciform DNA. This Limosilactobacillus fermentum (strain NBRC 3956 / LMG 18251) (Lactobacillus fermentum) protein is Holliday junction branch migration complex subunit RuvA.